The chain runs to 70 residues: Small, acid-soluble spore protein alpha (70 aa).

Belongs to the alpha/beta-type SASP family.

In terms of biological role, SASP are bound to spore DNA. They are double-stranded DNA-binding proteins that cause DNA to change to an a-like conformation. They protect the DNA backbone from chemical and enzymatic cleavage and are thus involved in dormant spore's high resistance to UV light. The sequence is that of Small, acid-soluble spore protein alpha from Paraclostridium bifermentans (Clostridium bifermentans).